A 93-amino-acid polypeptide reads, in one-letter code: UPF0358 protein ABC2396 (93 aa).

This sequence belongs to the UPF0358 family.

The protein is UPF0358 protein ABC2396 of Shouchella clausii (strain KSM-K16) (Alkalihalobacillus clausii).